The sequence spans 345 residues: RNA polymerase II holoenzyme cyclin-like subunit (345 aa).

The Cyclin N-terminal domain maps to 23 to 147 (ESRRKLLLLE…KLAEFEFYLI (125 aa)).

The protein belongs to the cyclin family. Cyclin C subfamily. In terms of assembly, component of the SRB8-11 complex, a regulatory module of the Mediator complex.

The protein resides in the nucleus. Functionally, component of the SRB8-11 complex. The SRB8-11 complex is a regulatory module of the Mediator complex which is itself involved in regulation of basal and activated RNA polymerase II-dependent transcription. The SRB8-11 complex may be involved in the transcriptional repression of a subset of genes regulated by Mediator. It may inhibit the association of the Mediator complex with RNA polymerase II to form the holoenzyme complex. The SRB8-11 complex phosphorylates the C-terminal domain (CTD) of the largest subunit of RNA polymerase II. This chain is RNA polymerase II holoenzyme cyclin-like subunit (SSN8), found in Debaryomyces hansenii (strain ATCC 36239 / CBS 767 / BCRC 21394 / JCM 1990 / NBRC 0083 / IGC 2968) (Yeast).